A 342-amino-acid chain; its full sequence is L-threonine 3-dehydrogenase (342 aa).

Residue C38 coordinates Zn(2+). Residues T40 and H43 each act as charge relay system in the active site. The Zn(2+) site is built by H63, E64, C93, C96, C99, and C107. NAD(+)-binding positions include I175, D195, R200, 262 to 264 (LGI), and 286 to 287 (IY).

The protein belongs to the zinc-containing alcohol dehydrogenase family. As to quaternary structure, homotetramer. It depends on Zn(2+) as a cofactor.

The protein resides in the cytoplasm. It carries out the reaction L-threonine + NAD(+) = (2S)-2-amino-3-oxobutanoate + NADH + H(+). It functions in the pathway amino-acid degradation; L-threonine degradation via oxydo-reductase pathway; glycine from L-threonine: step 1/2. In terms of biological role, catalyzes the NAD(+)-dependent oxidation of L-threonine to 2-amino-3-ketobutyrate. This Burkholderia ambifaria (strain ATCC BAA-244 / DSM 16087 / CCUG 44356 / LMG 19182 / AMMD) (Burkholderia cepacia (strain AMMD)) protein is L-threonine 3-dehydrogenase.